The following is a 331-amino-acid chain: Taste receptor type 2 member 38 (331 aa).

The Extracellular portion of the chain corresponds to 1–17 (MLTLTPVLTVSYEAKIS). Residues 18–38 (FLFLSVVEFAVGIMANAFIVL) form a helical membrane-spanning segment. The Cytoplasmic segment spans residues 39-54 (VNFWDMVKKQPLNNCD). A helical transmembrane segment spans residues 55–75 (IALLCLSITRLFLQGLLLLDA). Residues 76 to 94 (IQLACFQQMKDPLSHNYQA) are Extracellular-facing. Residues 95-115 (ILTLWMSANQVSLWLAACLSL) form a helical membrane-spanning segment. Topologically, residues 116–142 (LYCAKIVRFSHTFPLHLASWVSRRFLQ) are cytoplasmic. The chain crosses the membrane as a helical span at residues 143 to 163 (MLLVALLFSGVCTALCLWDFF). At 164-198 (SRSHTVVTSMLHMNNTEFNLQIEKLNFFYSFVFCN) the chain is on the extracellular side. A glycan (N-linked (GlcNAc...) asparagine) is linked at Asn-177. The helical transmembrane segment at 199 to 219 (VGSVPPSLVFLISSGVLVISL) threads the bilayer. Over 220–243 (GNHMRTMKSQTRGSRDPSLEAHVR) the chain is Cytoplasmic. Residues 244-264 (AIIFLVSFLCFYVVSFCAALI) traverse the membrane as a helical segment. At 265 to 276 (SIPLLVLWHNKG) the chain is on the extracellular side. Residues 277-297 (GVMVCIGMMAACPSGHAAILI) form a helical membrane-spanning segment. Residues 298–331 (SGNAKLKKVIVTILFWFQSRQKVRRVHKVLPRIL) lie on the Cytoplasmic side of the membrane.

This sequence belongs to the G-protein coupled receptor T2R family. Expressed in tongue, stomach and duodenum.

It localises to the membrane. Functionally, putative taste receptor which may play a role in the perception of bitterness. The protein is Taste receptor type 2 member 38 (Tas2r38) of Rattus norvegicus (Rat).